Consider the following 389-residue polypeptide: MKHPFQILTSSTDGKLLIASASSPSKESSLLLLLPELGDVLCQQNVPQPIYINYLETGPDKVLITADVDKNITIYKLENNELHQLKQQQMPKRLSGISTLNNDAIVCDSLGDVYQITIDTQPAVKKEDLKPLLGHTSPLTAVVAAQYKNPPKSFLITSDRDEHIRVSNYPKSYVIKGFLYGHTQFVSQIHLFEICKESRLVSGGGEGKLFFWDWFREVLITEFDLMPYVEEYLHEFHIKKSSKTKEEQDVQKEQEVENIQPKYEIGVQKIDSIEGEDGVFIVTLVENTSCLVVVHFTDEAKHAQTIQLAAPAVTFAIVGNKLFVSLDAENDNILTIYKFVDGQFVNDDEAQSSIAERIILANPINVEDKSKFAPFYSINQLRKRGNNYS.

WD repeat units lie at residues 44-86 (QNVP…HQLK), 134-179 (GHTS…KGFL), and 184-222 (QFVS…LITE).

The protein belongs to the WD repeat TRM82 family. Forms a heterodimer with the catalytic subunit TRM8.

It is found in the nucleus. Its pathway is tRNA modification; N(7)-methylguanine-tRNA biosynthesis. Functionally, required for the formation of N(7)-methylguanine at position 46 (m7G46) in tRNA. In the complex, it is required to stabilize and induce conformational changes of the catalytic subunit. This Lodderomyces elongisporus (strain ATCC 11503 / CBS 2605 / JCM 1781 / NBRC 1676 / NRRL YB-4239) (Yeast) protein is tRNA (guanine-N(7)-)-methyltransferase non-catalytic subunit TRM82.